Consider the following 414-residue polypeptide: Arrestin domain-containing protein 3 (414 aa).

2 consecutive short sequence motifs (PPxY motif) follow at residues 346–349 (PPSY) and 391–394 (PPLY). The interval 393–414 (LYSEIDPNPDQSADDRPSCPSR) is disordered. Over residues 405-414 (ADDRPSCPSR) the composition is skewed to basic and acidic residues.

The protein belongs to the arrestin family. As to quaternary structure, interacts (via PPxY motifs) with NEDD4 (via WW domains). Interacts with ADRB2. Interacts with ADRB3. Interacts with HGS (via PPxY motifs). Does not bind TXN (thioredoxin). Interacts with ITCH. Interacts with WWP1 (via WW domains). Highly expressed in skeletal muscle, placenta, kidney, lung, liver, blood, adrenal gland, lymph node, mammary gland, thyroid, and trachea. Very low levels in colon, thymus, spleen, small intestine, bladder and bone marrow. Strong expression in differentiated adipocytes compared to preadipocytes. Detected in omental fat and subcutaneous fat tissue.

It is found in the cytoplasm. It localises to the cell membrane. Its subcellular location is the lysosome. The protein resides in the endosome. The protein localises to the early endosome. Functionally, adapter protein that plays a role in regulating cell-surface expression of adrenergic receptors and probably also other G protein-coupled receptors. Plays a role in NEDD4-mediated ubiquitination and endocytosis af activated ADRB2 and subsequent ADRB2 degradation. May recruit NEDD4 to ADRB2. Alternatively, may function as adapter protein that does not play a major role in recruiting NEDD4 to ADRB2, but rather plays a role in a targeting ADRB2 to endosomes. This is Arrestin domain-containing protein 3 (ARRDC3) from Homo sapiens (Human).